A 160-amino-acid chain; its full sequence is Large ribosomal subunit protein eL21 (160 aa).

Composition is skewed to basic and acidic residues over residues 112–123 (NDQKKKEAKEKG) and 136–145 (REAHFVRTNG). Residues 112–145 (NDQKKKEAKEKGTWVQLKRQPAPPREAHFVRTNG) form a disordered region.

It belongs to the eukaryotic ribosomal protein eL21 family. In terms of assembly, component of the large ribosomal subunit.

The protein resides in the cytoplasm. It localises to the cytosol. The protein localises to the endoplasmic reticulum. Component of the large ribosomal subunit. The ribosome is a large ribonucleoprotein complex responsible for the synthesis of proteins in the cell. The chain is Large ribosomal subunit protein eL21 (RPL21) from Oryctolagus cuniculus (Rabbit).